A 238-amino-acid chain; its full sequence is Zinc import ATP-binding protein ZnuC (238 aa).

An ABC transporter domain is found at 5–220 (VKLKNVCVNL…LEFISIFGLK (216 aa)). Position 37–44 (37–44 (GPNGAGKS)) interacts with ATP.

It belongs to the ABC transporter superfamily. Zinc importer (TC 3.A.1.15.5) family. In terms of assembly, the complex is composed of two ATP-binding proteins (ZnuC), two transmembrane proteins (ZnuB) and a solute-binding protein (ZnuA).

It localises to the cell inner membrane. The catalysed reaction is Zn(2+)(out) + ATP(in) + H2O(in) = Zn(2+)(in) + ADP(in) + phosphate(in) + H(+)(in). Functionally, part of the ABC transporter complex ZnuABC involved in zinc import. Responsible for energy coupling to the transport system. The protein is Zinc import ATP-binding protein ZnuC of Buchnera aphidicola subsp. Acyrthosiphon pisum (strain APS) (Acyrthosiphon pisum symbiotic bacterium).